The sequence spans 645 residues: Lipase 1 (645 aa).

The first 24 residues, 1–24 (MKRSFIFAPGMLALSISAISNAHA), serve as a signal peptide directing secretion. S34 serves as the catalytic Nucleophile. Residues D327 and H330 contribute to the active site. Residues 383 to 645 (NEQGKLGVFG…SFSLGVNASF (263 aa)) form the Autotransporter domain.

It belongs to the 'GDSL' lipolytic enzyme family.

Its subcellular location is the secreted. The catalysed reaction is a triacylglycerol + H2O = a diacylglycerol + a fatty acid + H(+). This chain is Lipase 1 (lip-1), found in Photorhabdus luminescens (Xenorhabdus luminescens).